The sequence spans 540 residues: 2-isopropylmalate synthase (540 aa).

The Pyruvate carboxyltransferase domain occupies 8-271 (VLIFDTTLRD…NPFFGREEDS (264 aa)). Residues D17, H208, H210, and N244 each contribute to the Mn(2+) site. A regulatory domain region spans residues 408–540 (QLKLVQVSCG…PVVLESRPTL (133 aa)).

This sequence belongs to the alpha-IPM synthase/homocitrate synthase family. LeuA type 1 subfamily. In terms of assembly, homodimer. Mn(2+) serves as cofactor.

The protein resides in the cytoplasm. The catalysed reaction is 3-methyl-2-oxobutanoate + acetyl-CoA + H2O = (2S)-2-isopropylmalate + CoA + H(+). It participates in amino-acid biosynthesis; L-leucine biosynthesis; L-leucine from 3-methyl-2-oxobutanoate: step 1/4. Functionally, catalyzes the condensation of the acetyl group of acetyl-CoA with 3-methyl-2-oxobutanoate (2-ketoisovalerate) to form 3-carboxy-3-hydroxy-4-methylpentanoate (2-isopropylmalate). This Synechococcus sp. (strain CC9605) protein is 2-isopropylmalate synthase.